A 436-amino-acid chain; its full sequence is RNA-binding motif, single-stranded-interacting protein 3 (436 aa).

The interval 28 to 56 (APAPHPMAPPSPSTNSSSNNSSNNSSGEQ) is disordered. The segment covering 30–39 (APHPMAPPSP) has biased composition (pro residues). Residues 40–53 (STNSSSNNSSNNSS) show a composition bias toward low complexity. RRM domains follow at residues 60–133 (TNLY…MAKQ) and 139–224 (TNLY…FADG). Polar residues predominate over residues 398-421 (TSPQTVAPSSQDTSGQQQQIAVDT). Positions 398-436 (TSPQTVAPSSQDTSGQQQQIAVDTSNEHAPAYSYQQSKP) are disordered.

It is found in the cytoplasm. In terms of biological role, binds poly(A) and poly(U) oligoribonucleotides. In Pongo abelii (Sumatran orangutan), this protein is RNA-binding motif, single-stranded-interacting protein 3 (RBMS3).